The sequence spans 616 residues: Chaperone protein HscA (616 aa).

The protein belongs to the heat shock protein 70 family.

In terms of biological role, chaperone involved in the maturation of iron-sulfur cluster-containing proteins. Has a low intrinsic ATPase activity which is markedly stimulated by HscB. Involved in the maturation of IscU. The polypeptide is Chaperone protein HscA (Pectobacterium carotovorum subsp. carotovorum (strain PC1)).